The primary structure comprises 309 residues: DSC E3 ubiquitin ligase complex subunit C (309 aa).

N-linked (GlcNAc...) asparagine glycosylation occurs at asparagine 61. 2 disordered regions span residues 88–110 (LPPS…GKGK) and 148–177 (EQAD…FDRL). The next 2 membrane-spanning stretches (helical) occupy residues 257 to 277 (DDML…AMWL) and 289 to 309 (GLAV…RIMN).

This sequence belongs to the dsc3 family. In terms of assembly, component of the DSC E3 ubiquitin ligase complex composed of dscA, dscB, dscC and dscD.

Its subcellular location is the endoplasmic reticulum membrane. It functions in the pathway protein modification; protein ubiquitination. Component of the DSC E3 ubiquitin ligase complex which is required for the srbA transcriptional activator proteolytic cleavage to release the soluble transcription factor from the membrane in low oxygen or sterol conditions. Required for growth during hypoxia and triazole drug susceptibility, as well as for virulence in a murine model of invasive pulmonary aspergillosis (IPA). The chain is DSC E3 ubiquitin ligase complex subunit C from Aspergillus fumigatus (strain ATCC MYA-4609 / CBS 101355 / FGSC A1100 / Af293) (Neosartorya fumigata).